An 88-amino-acid chain; its full sequence is Long neurotoxin LNTX-1 (88 aa).

The first 21 residues, 1 to 21, serve as a signal peptide directing secretion; sequence MKTLLLTLVVVTIVCLDFGYA. 5 disulfide bridges follow: Cys-24–Cys-42, Cys-35–Cys-63, Cys-48–Cys-52, Cys-67–Cys-78, and Cys-79–Cys-84.

It belongs to the three-finger toxin family. Long-chain subfamily. Type II alpha-neurotoxin sub-subfamily. Expressed by the venom gland.

It is found in the secreted. In terms of biological role, binds with high affinity to muscular (alpha-1/CHRNA1) and neuronal (alpha-7/CHRNA7) nicotinic acetylcholine receptor (nAChR) and inhibits acetylcholine from binding to the receptor, thereby impairing neuromuscular and neuronal transmission. This Demansia vestigiata (Lesser black whip snake) protein is Long neurotoxin LNTX-1.